The sequence spans 75 residues: U6-lycotoxin-Ls1a (75 aa).

The first 21 residues, 1 to 21 (MKLLLFTALVLVVISLIEVEA), serve as a signal peptide directing secretion. The propeptide occupies 22 to 25 (ENER).

This sequence belongs to the neurotoxin 19 (CSTX) family. 06 (U6-Lctx) subfamily. In terms of processing, contains 4 disulfide bonds. As to expression, expressed by the venom gland.

The protein resides in the secreted. The polypeptide is U6-lycotoxin-Ls1a (Lycosa singoriensis (Wolf spider)).